The primary structure comprises 349 residues: Aspartate carbamoyltransferase catalytic subunit (349 aa).

Carbamoyl phosphate contacts are provided by R59 and T60. K87 contacts L-aspartate. Carbamoyl phosphate is bound by residues R109, H142, and Q145. Residues R182 and R253 each contribute to the L-aspartate site. Positions 294 and 295 each coordinate carbamoyl phosphate.

This sequence belongs to the aspartate/ornithine carbamoyltransferase superfamily. ATCase family. Heterododecamer (2C3:3R2) of six catalytic PyrB chains organized as two trimers (C3), and six regulatory PyrI chains organized as three dimers (R2).

It carries out the reaction carbamoyl phosphate + L-aspartate = N-carbamoyl-L-aspartate + phosphate + H(+). Its pathway is pyrimidine metabolism; UMP biosynthesis via de novo pathway; (S)-dihydroorotate from bicarbonate: step 2/3. Functionally, catalyzes the condensation of carbamoyl phosphate and aspartate to form carbamoyl aspartate and inorganic phosphate, the committed step in the de novo pyrimidine nucleotide biosynthesis pathway. This chain is Aspartate carbamoyltransferase catalytic subunit, found in Synechococcus sp. (strain CC9902).